The primary structure comprises 129 residues: Glycine cleavage system H protein (129 aa).

The Lipoyl-binding domain occupies serine 24 to methionine 106. Lysine 65 carries the N6-lipoyllysine modification.

The protein belongs to the GcvH family. In terms of assembly, the glycine cleavage system is composed of four proteins: P, T, L and H. It depends on (R)-lipoate as a cofactor.

The glycine cleavage system catalyzes the degradation of glycine. The H protein shuttles the methylamine group of glycine from the P protein to the T protein. In Shewanella baltica (strain OS155 / ATCC BAA-1091), this protein is Glycine cleavage system H protein.